The primary structure comprises 275 residues: Ribosomal RNA small subunit methyltransferase A (275 aa).

S-adenosyl-L-methionine-binding residues include Asn21, Leu23, Gly48, Glu69, Asp94, and Asn115.

Belongs to the class I-like SAM-binding methyltransferase superfamily. rRNA adenine N(6)-methyltransferase family. RsmA subfamily.

It localises to the cytoplasm. It carries out the reaction adenosine(1518)/adenosine(1519) in 16S rRNA + 4 S-adenosyl-L-methionine = N(6)-dimethyladenosine(1518)/N(6)-dimethyladenosine(1519) in 16S rRNA + 4 S-adenosyl-L-homocysteine + 4 H(+). Specifically dimethylates two adjacent adenosines (A1518 and A1519) in the loop of a conserved hairpin near the 3'-end of 16S rRNA in the 30S particle. May play a critical role in biogenesis of 30S subunits. The protein is Ribosomal RNA small subunit methyltransferase A of Clostridium botulinum (strain Kyoto / Type A2).